The primary structure comprises 341 residues: Holliday junction branch migration complex subunit RuvB (341 aa).

Positions 1 to 180 (MAKSHTLNPE…FGIQLRLDYY (180 aa)) are large ATPase domain (RuvB-L). ATP is bound by residues L19, R20, G61, K64, T65, T66, R170, Y180, and R217. T65 lines the Mg(2+) pocket. The tract at residues 181–251 (NDEEMKEIVL…LCLKAFEKMG (71 aa)) is small ATPAse domain (RuvB-S). The head domain (RuvB-H) stretch occupies residues 254 to 341 (DLGLDGMDRQ…ENHGQDPTLF (88 aa)). The DNA site is built by R309 and R314.

This sequence belongs to the RuvB family. Homohexamer. Forms an RuvA(8)-RuvB(12)-Holliday junction (HJ) complex. HJ DNA is sandwiched between 2 RuvA tetramers; dsDNA enters through RuvA and exits via RuvB. An RuvB hexamer assembles on each DNA strand where it exits the tetramer. Each RuvB hexamer is contacted by two RuvA subunits (via domain III) on 2 adjacent RuvB subunits; this complex drives branch migration. In the full resolvosome a probable DNA-RuvA(4)-RuvB(12)-RuvC(2) complex forms which resolves the HJ.

The protein localises to the cytoplasm. The enzyme catalyses ATP + H2O = ADP + phosphate + H(+). In terms of biological role, the RuvA-RuvB-RuvC complex processes Holliday junction (HJ) DNA during genetic recombination and DNA repair, while the RuvA-RuvB complex plays an important role in the rescue of blocked DNA replication forks via replication fork reversal (RFR). RuvA specifically binds to HJ cruciform DNA, conferring on it an open structure. The RuvB hexamer acts as an ATP-dependent pump, pulling dsDNA into and through the RuvAB complex. RuvB forms 2 homohexamers on either side of HJ DNA bound by 1 or 2 RuvA tetramers; 4 subunits per hexamer contact DNA at a time. Coordinated motions by a converter formed by DNA-disengaged RuvB subunits stimulates ATP hydrolysis and nucleotide exchange. Immobilization of the converter enables RuvB to convert the ATP-contained energy into a lever motion, pulling 2 nucleotides of DNA out of the RuvA tetramer per ATP hydrolyzed, thus driving DNA branch migration. The RuvB motors rotate together with the DNA substrate, which together with the progressing nucleotide cycle form the mechanistic basis for DNA recombination by continuous HJ branch migration. Branch migration allows RuvC to scan DNA until it finds its consensus sequence, where it cleaves and resolves cruciform DNA. This chain is Holliday junction branch migration complex subunit RuvB, found in Leptospira borgpetersenii serovar Hardjo-bovis (strain L550).